We begin with the raw amino-acid sequence, 396 residues long: S-arrestin (396 aa).

Belongs to the arrestin family.

In terms of biological role, arrestin is one of the major proteins of the ros (retinal rod outer segments); it binds to photoactivated-phosphorylated rhodopsin, thereby apparently preventing the transducin-mediated activation of phosphodiesterase. The sequence is that of S-arrestin from Lithobates pipiens (Northern leopard frog).